The sequence spans 300 residues: Sporulation protein SPS18 (300 aa).

An Arf-GAP domain is found at 11-130; the sequence is ENRKRLLRAK…LANEVRSNDI (120 aa). The C4-type zinc-finger motif lies at 28–51; the sequence is CFECKSVNPQFVSCSFGIFICVNC.

The chain is Sporulation protein SPS18 (SPS18) from Saccharomyces cerevisiae (strain ATCC 204508 / S288c) (Baker's yeast).